The primary structure comprises 324 residues: uncharacterized protein (324 aa).

8 helical membrane passes run 4–24 (GNKV…PEFM), 63–83 (AALL…EGIL), 106–128 (ALFY…ISFL), 132–151 (WQVQ…SHLL), 179–199 (LADI…AVTL), 209–229 (GLDG…LVIM), 246–266 (LETA…LYTL), and 282–302 (GTWK…GWFM).

Belongs to the TerC family.

It is found in the cell membrane. This is an uncharacterized protein from Bacillus subtilis (strain 168).